The primary structure comprises 406 residues: Glutamyl-tRNA reductase (406 aa).

Residues 51 to 54 (TCNR), S101, 106 to 108 (ESE), and Q112 each bind substrate. The Nucleophile role is filled by C52. 180–185 (GAGSIG) contacts NADP(+).

The protein belongs to the glutamyl-tRNA reductase family. As to quaternary structure, homodimer.

It carries out the reaction (S)-4-amino-5-oxopentanoate + tRNA(Glu) + NADP(+) = L-glutamyl-tRNA(Glu) + NADPH + H(+). The protein operates within porphyrin-containing compound metabolism; protoporphyrin-IX biosynthesis; 5-aminolevulinate from L-glutamyl-tRNA(Glu): step 1/2. Catalyzes the NADPH-dependent reduction of glutamyl-tRNA(Glu) to glutamate 1-semialdehyde (GSA). This Caldivirga maquilingensis (strain ATCC 700844 / DSM 13496 / JCM 10307 / IC-167) protein is Glutamyl-tRNA reductase.